Here is a 516-residue protein sequence, read N- to C-terminus: Glycosyltransferase-like protein gnt15 (516 aa).

Residues 1-24 (MSNFYNNNPRRNTFRLTERIKKKP) are Cytoplasmic-facing. Residues 25-45 (YQTLIVFILIFLFLYVFGPFG) form a helical; Signal-anchor for type II membrane protein membrane-spanning segment. The Extracellular portion of the chain corresponds to 46-516 (EKKSNNNNNN…NDNCLTREHW (471 aa)). An N-linked (GlcNAc...) asparagine glycan is attached at asparagine 152. The disordered stretch occupies residues 199–250 (DTSNNNNNNNNNNNNNNNNNNNNNNNNNNNNNNNENNDNDNGNNNNNNDNEK). Residues 202-246 (NNNNNNNNNNNNNNNNNNNNNNNNNNNNNNNENNDNDNGNNNNNN) are compositionally biased toward low complexity. 2 N-linked (GlcNAc...) asparagine glycosylation sites follow: asparagine 386 and asparagine 412.

Belongs to the glycosyltransferase 8 family. Highly divergent.

It is found in the membrane. Its function is as follows. May have a role in modulating cell adhesion and glycosylation. Essential for development. This chain is Glycosyltransferase-like protein gnt15 (gnt15), found in Dictyostelium discoideum (Social amoeba).